The following is a 178-amino-acid chain: Heavy metal-associated isoprenylated plant protein 30 (178 aa).

The HMA domain maps to 45 to 108 (LQTIDLKVRM…AVRRAGKRAE (64 aa)). Positions 56 and 59 each coordinate a metal cation. Cysteine 175 bears the Cysteine methyl ester mark. Cysteine 175 is lipidated: S-farnesyl cysteine. A propeptide spans 176–178 (SLM) (removed in mature form).

It belongs to the HIPP family. In terms of assembly, interacts with ZHD3/HB21, ZHD11/HB29 and ZHD8/HB30.

Functionally, heavy-metal-binding protein. In Arabidopsis thaliana (Mouse-ear cress), this protein is Heavy metal-associated isoprenylated plant protein 30.